A 361-amino-acid chain; its full sequence is Carbon monoxide-induced hydrogenase (361 aa).

Residues cysteine 64, cysteine 67, cysteine 355, and cysteine 358 each coordinate Ni(2+).

This sequence to E.coli formate hydrogenlyase hydrogenase isozyme 3 and to bovine mitochondrial NADH-ubiquinone oxidoreductase. The cofactor is Ni(2+).

The carbon monoxide dehydrogenase (CODH) oxidizes carbon monoxide coupled, via CooF, to the reduction of a hydrogen cation by a hydrogenase (probably CooH). The protein is Carbon monoxide-induced hydrogenase (cooH) of Rhodospirillum rubrum.